The following is a 1220-amino-acid chain: Deubiquitinating protein VCPIP1 (1220 aa).

Pro residues predominate over residues 1-19 (MSQPPPPPPLPPPPPPPEA). The tract at residues 1-40 (MSQPPPPPPLPPPPPPPEAPQTSSSLAAAASPGGLSKRRD) is disordered. Residues 20 to 35 (PQTSSSLAAAASPGGL) are compositionally biased toward low complexity. The OTU domain maps to 207-360 (LIPVHVDGDG…RNHYIPLVGI (154 aa)). The active site involves aspartate 215. Catalysis depends on cysteine 218, which acts as the Nucleophile. Residue histidine 353 is part of the active site. At lysine 407 the chain carries N6-acetyllysine. 2 disordered regions span residues 724 to 778 (SVMQ…KIRI) and 988 to 1008 (EATT…LGSG). Residues serine 746 and serine 756 each carry the phosphoserine modification. Low complexity predominate over residues 754–770 (PSSAPATPTKAPYSPTT). Threonine 762 carries the phosphothreonine modification. 4 positions are modified to phosphoserine: serine 767, serine 993, serine 997, and serine 1076. Disordered regions lie at residues 1113–1140 (SSIQ…QRKV) and 1185–1220 (FATR…MDHS). 2 positions are modified to phosphoserine: serine 1196 and serine 1205. A compositionally biased stretch (acidic residues) spans 1197–1207 (MEEPEEMDSQD). The span at 1208-1220 (AETTNTTEPMDHS) shows a compositional bias: polar residues.

As to quaternary structure, binds VCP and the ternary complex containing STX5A, NSFL1C and VCP. In terms of processing, phosphorylated at Ser-1205 by ATM or ATR following induction of covalent DNA-protein cross-links (DPCs).

The protein resides in the nucleus. Its subcellular location is the cytoplasm. The protein localises to the endoplasmic reticulum. It localises to the golgi apparatus. It is found in the golgi stack. The enzyme catalyses Thiol-dependent hydrolysis of ester, thioester, amide, peptide and isopeptide bonds formed by the C-terminal Gly of ubiquitin (a 76-residue protein attached to proteins as an intracellular targeting signal).. In terms of biological role, deubiquitinating enzyme involved in DNA repair and reassembly of the Golgi apparatus and the endoplasmic reticulum following mitosis. Necessary for VCP-mediated reassembly of Golgi stacks after mitosis. Plays a role in VCP-mediated formation of transitional endoplasmic reticulum (tER). Mediates dissociation of the ternary complex containing STX5A, NSFL1C and VCP. Also involved in DNA repair following phosphorylation by ATM or ATR: acts by catalyzing deubiquitination of SPRTN, thereby promoting SPRTN recruitment to chromatin and subsequent proteolytic cleavage of covalent DNA-protein cross-links (DPCs). Hydrolyzes 'Lys-11'- and 'Lys-48'-linked polyubiquitin chains. This is Deubiquitinating protein VCPIP1 from Mus musculus (Mouse).